Consider the following 325-residue polypeptide: tRNA dimethylallyltransferase (325 aa).

ATP is bound at residue 21–28 (GPTASGKS). 23-28 (TASGKS) lines the substrate pocket. The interaction with substrate tRNA stretch occupies residues 166 to 170 (QRLAR).

It belongs to the IPP transferase family. In terms of assembly, monomer. The cofactor is Mg(2+).

The catalysed reaction is adenosine(37) in tRNA + dimethylallyl diphosphate = N(6)-dimethylallyladenosine(37) in tRNA + diphosphate. Functionally, catalyzes the transfer of a dimethylallyl group onto the adenine at position 37 in tRNAs that read codons beginning with uridine, leading to the formation of N6-(dimethylallyl)adenosine (i(6)A). The polypeptide is tRNA dimethylallyltransferase (Acidiphilium cryptum (strain JF-5)).